The chain runs to 224 residues: Lipoprotein-releasing system ATP-binding protein LolD (224 aa).

In terms of domain architecture, ABC transporter spans 4–224 (LSIRNVFKSY…RLAGGEVSEA (221 aa)). 40–47 (GASGAGKS) is a binding site for ATP.

Belongs to the ABC transporter superfamily. Lipoprotein translocase (TC 3.A.1.125) family. As to quaternary structure, the complex is composed of two ATP-binding proteins (LolD) and two transmembrane proteins (LolC and LolE).

It is found in the cell inner membrane. Its function is as follows. Part of the ABC transporter complex LolCDE involved in the translocation of mature outer membrane-directed lipoproteins, from the inner membrane to the periplasmic chaperone, LolA. Responsible for the formation of the LolA-lipoprotein complex in an ATP-dependent manner. This chain is Lipoprotein-releasing system ATP-binding protein LolD, found in Myxococcus xanthus (strain DK1622).